A 132-amino-acid chain; its full sequence is Protein NrdI (132 aa).

Belongs to the NrdI family.

Functionally, probably involved in ribonucleotide reductase function. This Bartonella quintana (strain Toulouse) (Rochalimaea quintana) protein is Protein NrdI.